A 132-amino-acid polypeptide reads, in one-letter code: Phosphoribosyl-AMP cyclohydrolase (132 aa).

A Mg(2+)-binding site is contributed by Asp78. Cys79 serves as a coordination point for Zn(2+). Residues Asp80 and Asp82 each coordinate Mg(2+). Zn(2+) is bound by residues Cys96 and Cys103.

This sequence belongs to the PRA-CH family. As to quaternary structure, homodimer. Mg(2+) serves as cofactor. It depends on Zn(2+) as a cofactor.

It localises to the cytoplasm. It carries out the reaction 1-(5-phospho-beta-D-ribosyl)-5'-AMP + H2O = 1-(5-phospho-beta-D-ribosyl)-5-[(5-phospho-beta-D-ribosylamino)methylideneamino]imidazole-4-carboxamide. Its pathway is amino-acid biosynthesis; L-histidine biosynthesis; L-histidine from 5-phospho-alpha-D-ribose 1-diphosphate: step 3/9. In terms of biological role, catalyzes the hydrolysis of the adenine ring of phosphoribosyl-AMP. The polypeptide is Phosphoribosyl-AMP cyclohydrolase (Nitrosococcus oceani (strain ATCC 19707 / BCRC 17464 / JCM 30415 / NCIMB 11848 / C-107)).